The primary structure comprises 401 residues: tRNA-specific 2-thiouridylase MnmA (401 aa).

Residues 13-20 (GLSGGVDS) and Met39 each bind ATP. The interaction with target base in tRNA stretch occupies residues 99–101 (NPD). Residue Cys104 is the Nucleophile of the active site. A disulfide bond links Cys104 and Cys202. Gly128 provides a ligand contact to ATP. The interval 152-154 (KDQ) is interaction with tRNA. Residue Cys202 is the Cysteine persulfide intermediate of the active site. Positions 329–330 (RY) are interaction with tRNA.

This sequence belongs to the MnmA/TRMU family.

Its subcellular location is the cytoplasm. The enzyme catalyses S-sulfanyl-L-cysteinyl-[protein] + uridine(34) in tRNA + AH2 + ATP = 2-thiouridine(34) in tRNA + L-cysteinyl-[protein] + A + AMP + diphosphate + H(+). Functionally, catalyzes the 2-thiolation of uridine at the wobble position (U34) of tRNA, leading to the formation of s(2)U34. The sequence is that of tRNA-specific 2-thiouridylase MnmA from Polaromonas sp. (strain JS666 / ATCC BAA-500).